The following is a 71-amino-acid chain: Small ribosomal subunit protein bS21 (71 aa).

Belongs to the bacterial ribosomal protein bS21 family.

This is Small ribosomal subunit protein bS21 from Hahella chejuensis (strain KCTC 2396).